A 378-amino-acid chain; its full sequence is Queuine tRNA-ribosyltransferase (378 aa).

The active-site Proton acceptor is Asp-89. Residues 89 to 93 (DSGGF), Asp-143, Gln-187, and Gly-214 each bind substrate. Residues 245–251 (GVGKPED) form an RNA binding region. Asp-264 acts as the Nucleophile in catalysis. The RNA binding; important for wobble base 34 recognition stretch occupies residues 269–273 (TRNAR). Cys-302, Cys-304, Cys-307, and His-333 together coordinate Zn(2+).

Belongs to the queuine tRNA-ribosyltransferase family. As to quaternary structure, homodimer. Within each dimer, one monomer is responsible for RNA recognition and catalysis, while the other monomer binds to the replacement base PreQ1. It depends on Zn(2+) as a cofactor.

It carries out the reaction 7-aminomethyl-7-carbaguanine + guanosine(34) in tRNA = 7-aminomethyl-7-carbaguanosine(34) in tRNA + guanine. Its pathway is tRNA modification; tRNA-queuosine biosynthesis. Catalyzes the base-exchange of a guanine (G) residue with the queuine precursor 7-aminomethyl-7-deazaguanine (PreQ1) at position 34 (anticodon wobble position) in tRNAs with GU(N) anticodons (tRNA-Asp, -Asn, -His and -Tyr). Catalysis occurs through a double-displacement mechanism. The nucleophile active site attacks the C1' of nucleotide 34 to detach the guanine base from the RNA, forming a covalent enzyme-RNA intermediate. The proton acceptor active site deprotonates the incoming PreQ1, allowing a nucleophilic attack on the C1' of the ribose to form the product. After dissociation, two additional enzymatic reactions on the tRNA convert PreQ1 to queuine (Q), resulting in the hypermodified nucleoside queuosine (7-(((4,5-cis-dihydroxy-2-cyclopenten-1-yl)amino)methyl)-7-deazaguanosine). This is Queuine tRNA-ribosyltransferase from Yersinia enterocolitica serotype O:8 / biotype 1B (strain NCTC 13174 / 8081).